A 686-amino-acid polypeptide reads, in one-letter code: Protein-glutamine gamma-glutamyltransferase 2 (686 aa).

Position 2 is an N-acetylalanine (Ala2). Intrachain disulfides connect Cys230–Cys370 and Cys370–Cys371. Catalysis depends on residues Cys277, His335, and Asp358. Residues Asn398, Asp400, Glu437, Glu447, and Glu452 each coordinate Ca(2+). Lys468 is subject to N6-acetyllysine. 476 to 483 provides a ligand contact to GTP; that stretch reads RIRVGDSM. Glu538 serves as a coordination point for Ca(2+). 579-582 is a GTP binding site; the sequence is RDLY. Gln632 is covalently cross-linked (Isoglutamyl lysine isopeptide (Gln-Lys) (interchain with K-?)).

Belongs to the transglutaminase superfamily. Transglutaminase family. As to quaternary structure, monomer. Interacts with phospholipase C; promoting alpha-1 adrenergic receptor signaling. Interacts with PLCD1. Requires Ca(2+) as cofactor. In terms of processing, disulfide bond formation inactivates the calcium-dependent acyltransferase activity. Cys-370 can form disulfide bonds with both Cys-230 and Cys-371: formation of a disulfide bond between Cys-230 and Cys-370 facilitates formation of the disulfide between Cys-370 and Cys-371, which promotes inactivation of the acyltransferase activity. May also form interchain disulfids between Cys-230 and Cys-370. Ca(2+) protects against disulfide bond formation and inactivation. Post-translationally, auto-transglutaminated: Forms covalent cross-links mediated by transglutaminase between Gln-632 and the epsilon-amino group of a lysine residue of itself or HMGB1, forming homopolymers and heteropolymers, respectively. S-nitrosylated, leading to inactivation of the acyltransferase activity.

The protein resides in the cytoplasm. It is found in the cytosol. The protein localises to the nucleus. It localises to the chromosome. Its subcellular location is the secreted. The protein resides in the extracellular space. It is found in the extracellular matrix. The protein localises to the cell membrane. It localises to the mitochondrion. It catalyses the reaction L-glutaminyl-[protein] + L-lysyl-[protein] = [protein]-L-lysyl-N(6)-5-L-glutamyl-[protein] + NH4(+). The enzyme catalyses L-glutaminyl-[protein] + serotonin = 5-serotonyl-L-glutamyl-[protein] + NH4(+). It carries out the reaction L-glutaminyl-[protein] + dopamine = 5-dopaminyl-L-glutamyl-[protein] + NH4(+). The catalysed reaction is L-glutaminyl-[protein] + histamine = 5-histaminyl-L-glutamyl-[protein] + NH4(+). It catalyses the reaction L-glutaminyl-[protein] + (R)-noradrenaline = 5-(R)-noradrenalinyl-L-glutamyl-[protein] + NH4(+). The enzyme catalyses L-glutaminyl-[protein] + H2O = L-glutamyl-[protein] + NH4(+). Its activity is regulated as follows. Acyltransferase activity is regulated by the binding of GTP and Ca(2+): inactivated by GTP, which stabilizes its closed structure, thereby obstructing the accessibility of substrates to the active sites. In contrast, Ca(2+) acts as a cofactor by inducing conformational change to the active open form. In absence of Ca(2+), Mg(2+) may bind Ca(2+)-binding sites, promoting GTP-binding and subsequent inhibition of the acyltransferase activity. Extracellularly reduced and activated by CLIC3. In terms of biological role, calcium-dependent acyltransferase that catalyzes the formation of covalent bonds between peptide-bound glutamine and various primary amines, such as gamma-amino group of peptide-bound lysine, or mono- and polyamines, thereby producing cross-linked or aminated proteins, respectively. Involved in many biological processes, such as bone development, angiogenesis, wound healing, cellular differentiation, chromatin modification and apoptosis. Acts as a protein-glutamine gamma-glutamyltransferase by mediating the cross-linking of proteins, such as ACO2, HSPB6, FN1, HMGB1, RAP1GDS1, SLC25A4/ANT1, SPP1 and WDR54. Under physiological conditions, the protein cross-linking activity is inhibited by GTP; inhibition is relieved by Ca(2+) in response to various stresses. When secreted, catalyzes cross-linking of proteins of the extracellular matrix, such as FN1 and SPP1 resulting in the formation of scaffolds. Plays a key role during apoptosis, both by (1) promoting the cross-linking of cytoskeletal proteins resulting in condensation of the cytoplasm, and by (2) mediating cross-linking proteins of the extracellular matrix, resulting in the irreversible formation of scaffolds that stabilize the integrity of the dying cells before their clearance by phagocytosis, thereby preventing the leakage of harmful intracellular components. In addition to protein cross-linking, can use different monoamine substrates to catalyze a vast array of protein post-translational modifications: mediates aminylation of serotonin, dopamine, noradrenaline or histamine into glutamine residues of target proteins to generate protein serotonylation, dopaminylation, noradrenalinylation or histaminylation, respectively. Mediates protein serotonylation of small GTPases during activation and aggregation of platelets, leading to constitutive activation of these GTPases. Plays a key role in chromatin organization by mediating serotonylation and dopaminylation of histone H3. Catalyzes serotonylation of 'Gln-5' of histone H3 (H3Q5ser) during serotonergic neuron differentiation, thereby facilitating transcription. Acts as a mediator of neurotransmission-independent role of nuclear dopamine in ventral tegmental area (VTA) neurons: catalyzes dopaminylation of 'Gln-5' of histone H3 (H3Q5dop), thereby regulating relapse-related transcriptional plasticity in the reward system. Regulates vein remodeling by mediating serotonylation and subsequent inactivation of ATP2A2/SERCA2. Also acts as a protein deamidase by mediating the side chain deamidation of specific glutamine residues of proteins to glutamate. Catalyzes specific deamidation of protein gliadin, a component of wheat gluten in the diet. May also act as an isopeptidase cleaving the previously formed cross-links. Also able to participate in signaling pathways independently of its acyltransferase activity: acts as a signal transducer in alpha-1 adrenergic receptor-mediated stimulation of phospholipase C-delta (PLCD) activity and is required for coupling alpha-1 adrenergic agonists to the stimulation of phosphoinositide lipid metabolism. This Mus musculus (Mouse) protein is Protein-glutamine gamma-glutamyltransferase 2.